The primary structure comprises 190 residues: Threonylcarbamoyl-AMP synthase (190 aa).

In terms of domain architecture, YrdC-like spans 7 to 190 (TGSIAAAVDL…ALTGELFRQG (184 aa)).

It belongs to the SUA5 family. TsaC subfamily.

It is found in the cytoplasm. The enzyme catalyses L-threonine + hydrogencarbonate + ATP = L-threonylcarbamoyladenylate + diphosphate + H2O. Functionally, required for the formation of a threonylcarbamoyl group on adenosine at position 37 (t(6)A37) in tRNAs that read codons beginning with adenine. Catalyzes the conversion of L-threonine, HCO(3)(-)/CO(2) and ATP to give threonylcarbamoyl-AMP (TC-AMP) as the acyladenylate intermediate, with the release of diphosphate. The polypeptide is Threonylcarbamoyl-AMP synthase (Salmonella choleraesuis (strain SC-B67)).